The following is a 334-amino-acid chain: Beta-ketoacyl-[acyl-carrier-protein] synthase III (334 aa).

Catalysis depends on residues C114 and H253. Residues 254–258 (QANIR) form an ACP-binding region. N283 is an active-site residue.

It belongs to the thiolase-like superfamily. FabH family. Homodimer.

It localises to the cytoplasm. The catalysed reaction is malonyl-[ACP] + acetyl-CoA + H(+) = 3-oxobutanoyl-[ACP] + CO2 + CoA. Its pathway is lipid metabolism; fatty acid biosynthesis. Its function is as follows. Catalyzes the condensation reaction of fatty acid synthesis by the addition to an acyl acceptor of two carbons from malonyl-ACP. Catalyzes the first condensation reaction which initiates fatty acid synthesis and may therefore play a role in governing the total rate of fatty acid production. Possesses both acetoacetyl-ACP synthase and acetyl transacylase activities. Its substrate specificity determines the biosynthesis of branched-chain and/or straight-chain of fatty acids. The sequence is that of Beta-ketoacyl-[acyl-carrier-protein] synthase III from Campylobacter concisus (strain 13826).